We begin with the raw amino-acid sequence, 290 residues long: Glycine-N-acyltransferase-like protein 3 (290 aa).

The enzyme catalyses an acyl-CoA + glycine = an N-acylglycine + CoA + H(+). It carries out the reaction (9Z)-octadecenoyl-CoA + glycine = N-(9Z-octadecenoyl)glycine + CoA + H(+). The catalysed reaction is hexadecanoyl-CoA + glycine = N-hexadecanoylglycine + CoA + H(+). It participates in lipid metabolism. Its function is as follows. Catalyzes the conjugation of long-chain fatty acyl-CoA thioester and glycine to produce long-chain N-(fatty acyl)glycine, an intermediate in the primary fatty acid amide biosynthetic pathway. This chain is Glycine-N-acyltransferase-like protein 3, found in Mus musculus (Mouse).